A 112-amino-acid chain; its full sequence is Elongin-C (112 aa).

The protein belongs to the SKP1 family. As to quaternary structure, heterotrimer of an A (ELOA, ELOA2 or ELOA3P), ELOB and ELOC subunit. The elongin BC complex interacts with EPOP; leading to recruit the elongin BC complex to Polycomb group (PcG) target genes, thereby restricting excessive activity of the PRC2/EED-EZH2 complex. Component of multiple cullin-RING E3 ubiquitin-protein ligase complexes composed of Elongin BC (ELOB and ELOC), a cullin (CUL2 or CUL5), a catalytic subunit (RBX1 or RNF7/RBX2), as well as a substrate adapter protein that can be either ASB2, ASB9, ASB11, KLHDC2, KLHDC3, KLHDC10, APPBP2, FEM1A, FEM1B, FEM1C, LRR1, PCMTD1, SOCS1, SOCS2, SOCS5, SPSB1, SPSB3, ELOA, VHL, WSB1, ZYG11B or RAB40C. Interacts with TMF1. As part of the Elongin BC E3 ubiquitin ligase complex; interacts with NRBP1. May form oligomers as a KLHDC2/KLHDC3-ELOB-ELOC complex; this interaction is autoinhibitory for the E3 ligase complex as the substrate-binding site of KLHDC2/KLHDC3 is blocked in the oligomer. In terms of processing, ubiquitinated by the DCX(AMBRA1) complex, leading to its degradation by the proteasome.

The protein resides in the nucleus. The protein operates within protein modification; protein ubiquitination. In terms of biological role, SIII, also known as elongin, is a general transcription elongation factor that increases the RNA polymerase II transcription elongation past template-encoded arresting sites. Subunit A is transcriptionally active and its transcription activity is strongly enhanced by binding to the dimeric complex of the SIII regulatory subunits B and C (elongin BC complex). In embryonic stem cells, the elongin BC complex is recruited by EPOP to Polycomb group (PcG) target genes in order generate genomic region that display both active and repressive chromatin properties, an important feature of pluripotent stem cells. Its function is as follows. Core component of multiple cullin-RING-based ECS (ElonginB/C-CUL2/5-SOCS-box protein) E3 ubiquitin-protein ligase complexes, which mediate the ubiquitination of target proteins. By binding to BC-box motifs it seems to link target recruitment subunits, like VHL and members of the SOCS box family, to Cullin/RBX1 modules that activate E2 ubiquitination enzymes. Component the von Hippel-Lindau ubiquitination complex CBC(VHL). A number of ECS complexes (containing either KLHDC2, KLHDC3, KLHDC10, APPBP2, FEM1A, FEM1B or FEM1C as substrate-recognition component) are part of the DesCEND (destruction via C-end degrons) pathway, which recognizes a C-degron located at the extreme C terminus of target proteins, leading to their ubiquitination and degradation. The ECS(ASB9) complex mediates ubiquitination and degradation of CKB. As part of a multisubunit ubiquitin ligase complex, polyubiquitinates monoubiquitinated POLR2A. ECS(LRR1) ubiquitinates MCM7 and promotes CMG replisome disassembly by VCP and chromatin extraction during S-phase. As part of the ECS(RAB40C) complex, mediates ANKRD28 ubiquitination and degradation, thereby inhibiting protein phosphatase 6 (PP6) complex activity and focal adhesion assembly during cell migration. This Bos taurus (Bovine) protein is Elongin-C (ELOC).